An 89-amino-acid chain; its full sequence is Small ribosomal subunit protein uS14A (89 aa).

The disordered stretch occupies residues 29–62 (AAGDRTALAKLPRDSNPNRLRLRDQTDGRPRGYM). Residues 49-58 (RLRDQTDGRP) show a composition bias toward basic and acidic residues.

Belongs to the universal ribosomal protein uS14 family. As to quaternary structure, part of the 30S ribosomal subunit. Contacts proteins S3 and S10.

Binds 16S rRNA, required for the assembly of 30S particles and may also be responsible for determining the conformation of the 16S rRNA at the A site. This is Small ribosomal subunit protein uS14A from Enterococcus faecalis (strain ATCC 700802 / V583).